The primary structure comprises 251 residues: 2,3-bisphosphoglycerate-dependent phosphoglycerate mutase 2 (251 aa).

Substrate-binding positions include Arg8–Asn15, Thr21–Gly22, Arg60, Glu87–Tyr90, Lys98, Arg114–Arg115, and Gly183–Asn184. His9 functions as the Tele-phosphohistidine intermediate in the catalytic mechanism. Residue Glu87 is the Proton donor/acceptor of the active site.

This sequence belongs to the phosphoglycerate mutase family. BPG-dependent PGAM subfamily. In terms of assembly, homodimer.

It carries out the reaction (2R)-2-phosphoglycerate = (2R)-3-phosphoglycerate. Its pathway is carbohydrate degradation; glycolysis; pyruvate from D-glyceraldehyde 3-phosphate: step 3/5. Its function is as follows. Catalyzes the interconversion of 2-phosphoglycerate and 3-phosphoglycerate. The sequence is that of 2,3-bisphosphoglycerate-dependent phosphoglycerate mutase 2 from Nitrosospira multiformis (strain ATCC 25196 / NCIMB 11849 / C 71).